The primary structure comprises 226 residues: Ribosome-recycling factor, mitochondrial (226 aa).

This sequence belongs to the RRF family.

It is found in the mitochondrion. Its function is as follows. Necessary for protein synthesis in mitochondria. Functions as a ribosome recycling factor in mitochondria. This chain is Ribosome-recycling factor, mitochondrial (RRF1), found in Eremothecium gossypii (strain ATCC 10895 / CBS 109.51 / FGSC 9923 / NRRL Y-1056) (Yeast).